The following is a 182-amino-acid chain: uncharacterized protein (182 aa).

The span at 1-23 shows a compositional bias: polar residues; that stretch reads MILSDQNFLQTQWKEPQTAQSKN. The disordered stretch occupies residues 1-33; the sequence is MILSDQNFLQTQWKEPQTAQSKNTESKCEFHGN.

The protein belongs to the peptidase M24 family.

This is an uncharacterized protein from Caenorhabditis elegans.